A 156-amino-acid polypeptide reads, in one-letter code: Snaclec A6 (156 aa).

Positions 1 to 23 are cleaved as a signal peptide; the sequence is MGRSISVSFGLLVVFLSLSGTGA. 3 disulfide bridges follow: Cys-27/Cys-38, Cys-55/Cys-154, and Cys-129/Cys-146. The 122-residue stretch at 34–155 folds into the C-type lectin domain; the sequence is HEGHCYKVFN…CGKPYRFTCE (122 aa).

This sequence belongs to the snaclec family. As to quaternary structure, heterodimer; disulfide-linked. In terms of tissue distribution, expressed by the venom gland.

Its subcellular location is the secreted. In terms of biological role, interferes with one step of hemostasis (modulation of platelet aggregation, or coagulation cascade, for example). The chain is Snaclec A6 from Macrovipera lebetinus (Levantine viper).